The chain runs to 89 residues: MSITVERKKALISEYADLENNTGSVEVQCAILTERIINLTQHCKINFKDFHSKRGLLMLVSSRRKLLSYLKKKDLNRYTQLINRLGLRK.

It belongs to the universal ribosomal protein uS15 family. As to quaternary structure, part of the 30S ribosomal subunit. Forms a bridge to the 50S subunit in the 70S ribosome, contacting the 23S rRNA.

Its function is as follows. One of the primary rRNA binding proteins, it binds directly to 16S rRNA where it helps nucleate assembly of the platform of the 30S subunit by binding and bridging several RNA helices of the 16S rRNA. Forms an intersubunit bridge (bridge B4) with the 23S rRNA of the 50S subunit in the ribosome. This is Small ribosomal subunit protein uS15 from Orientia tsutsugamushi (strain Boryong) (Rickettsia tsutsugamushi).